The following is a 237-amino-acid chain: LexA repressor (237 aa).

Positions 26–46 (FDEMKEALDLRSKSGIHRLIT) form a DNA-binding region, H-T-H motif. Residues 84–110 (GFSPSVIEGGAQPKPSSRDLAPARSSG) form a disordered region. Catalysis depends on for autocatalytic cleavage activity residues serine 158 and lysine 196.

It belongs to the peptidase S24 family. As to quaternary structure, homodimer.

The enzyme catalyses Hydrolysis of Ala-|-Gly bond in repressor LexA.. Functionally, represses a number of genes involved in the response to DNA damage (SOS response), including recA and lexA. In the presence of single-stranded DNA, RecA interacts with LexA causing an autocatalytic cleavage which disrupts the DNA-binding part of LexA, leading to derepression of the SOS regulon and eventually DNA repair. The protein is LexA repressor of Parvibaculum lavamentivorans (strain DS-1 / DSM 13023 / NCIMB 13966).